The primary structure comprises 321 residues: Replication factor C small subunit (321 aa).

Position 43-50 (43-50) interacts with ATP; sequence GFAGVGKT.

Belongs to the activator 1 small subunits family. RfcS subfamily. As to quaternary structure, heteromultimer composed of small subunits (RfcS) and large subunits (RfcL).

Part of the RFC clamp loader complex which loads the PCNA sliding clamp onto DNA. The protein is Replication factor C small subunit of Methanosphaera stadtmanae (strain ATCC 43021 / DSM 3091 / JCM 11832 / MCB-3).